Here is a 361-residue protein sequence, read N- to C-terminus: Holliday junction branch migration complex subunit RuvB (361 aa).

The tract at residues 1–25 is disordered; the sequence is MSIHTDDFGQGGFAQGGFPPDKAPD. Residues 5–207 are large ATPase domain (RuvB-L); that stretch reads TDDFGQGGFA…FGIVARLEFY (203 aa). Residues leucine 46, arginine 47, glycine 88, lysine 91, threonine 92, threonine 93, 154–156, arginine 197, tyrosine 207, and arginine 244 contribute to the ATP site; that span reads EDY. Residue threonine 92 coordinates Mg(2+). The segment at 208-278 is small ATPAse domain (RuvB-S); that stretch reads TAEELARIVR…LADRALAMLD (71 aa). Residues 281-361 are head domain (RuvB-H); sequence PQGFDIMDRK…GLPVPGDDAS (81 aa). DNA contacts are provided by arginine 336 and arginine 341.

Belongs to the RuvB family. In terms of assembly, homohexamer. Forms an RuvA(8)-RuvB(12)-Holliday junction (HJ) complex. HJ DNA is sandwiched between 2 RuvA tetramers; dsDNA enters through RuvA and exits via RuvB. An RuvB hexamer assembles on each DNA strand where it exits the tetramer. Each RuvB hexamer is contacted by two RuvA subunits (via domain III) on 2 adjacent RuvB subunits; this complex drives branch migration. In the full resolvosome a probable DNA-RuvA(4)-RuvB(12)-RuvC(2) complex forms which resolves the HJ.

It localises to the cytoplasm. The catalysed reaction is ATP + H2O = ADP + phosphate + H(+). In terms of biological role, the RuvA-RuvB-RuvC complex processes Holliday junction (HJ) DNA during genetic recombination and DNA repair, while the RuvA-RuvB complex plays an important role in the rescue of blocked DNA replication forks via replication fork reversal (RFR). RuvA specifically binds to HJ cruciform DNA, conferring on it an open structure. The RuvB hexamer acts as an ATP-dependent pump, pulling dsDNA into and through the RuvAB complex. RuvB forms 2 homohexamers on either side of HJ DNA bound by 1 or 2 RuvA tetramers; 4 subunits per hexamer contact DNA at a time. Coordinated motions by a converter formed by DNA-disengaged RuvB subunits stimulates ATP hydrolysis and nucleotide exchange. Immobilization of the converter enables RuvB to convert the ATP-contained energy into a lever motion, pulling 2 nucleotides of DNA out of the RuvA tetramer per ATP hydrolyzed, thus driving DNA branch migration. The RuvB motors rotate together with the DNA substrate, which together with the progressing nucleotide cycle form the mechanistic basis for DNA recombination by continuous HJ branch migration. Branch migration allows RuvC to scan DNA until it finds its consensus sequence, where it cleaves and resolves cruciform DNA. This chain is Holliday junction branch migration complex subunit RuvB, found in Delftia acidovorans (strain DSM 14801 / SPH-1).